The chain runs to 176 residues: Tubulin polymerization-promoting protein family member 3 (176 aa).

Residue Ala-2 is modified to N-acetylalanine. Residues 132-152 (TGSHKERFDESGKGKGIAGRQ) are disordered. A compositionally biased stretch (basic and acidic residues) spans 134-144 (SHKERFDESGK).

The protein belongs to the TPPP family.

It localises to the cytoplasm. The protein resides in the cytoskeleton. Functionally, regulator of microtubule dynamic that has microtubule bundling activity. Required for embryo implantation; possibly by regulating beta-catenin. Also required for decidualization via regulation of beta-catenin. The chain is Tubulin polymerization-promoting protein family member 3 from Mus musculus (Mouse).